Here is an 82-residue protein sequence, read N- to C-terminus: Large ribosomal subunit protein uL23 (82 aa).

The protein belongs to the universal ribosomal protein uL23 family. In terms of assembly, part of the 50S ribosomal subunit. Contacts protein L29.

Its function is as follows. Binds to 23S rRNA. One of the proteins that surrounds the polypeptide exit tunnel on the outside of the ribosome. In Methanosarcina mazei (strain ATCC BAA-159 / DSM 3647 / Goe1 / Go1 / JCM 11833 / OCM 88) (Methanosarcina frisia), this protein is Large ribosomal subunit protein uL23.